The following is a 120-amino-acid chain: Aspartate 1-decarboxylase (120 aa).

Serine 25 acts as the Schiff-base intermediate with substrate; via pyruvic acid in catalysis. Serine 25 carries the pyruvic acid (Ser) modification. Threonine 57 provides a ligand contact to substrate. Catalysis depends on tyrosine 58, which acts as the Proton donor. Residue 73–75 (GAA) participates in substrate binding.

The protein belongs to the PanD family. Heterooctamer of four alpha and four beta subunits. It depends on pyruvate as a cofactor. In terms of processing, is synthesized initially as an inactive proenzyme, which is activated by self-cleavage at a specific serine bond to produce a beta-subunit with a hydroxyl group at its C-terminus and an alpha-subunit with a pyruvoyl group at its N-terminus.

The protein resides in the cytoplasm. It carries out the reaction L-aspartate + H(+) = beta-alanine + CO2. It functions in the pathway cofactor biosynthesis; (R)-pantothenate biosynthesis; beta-alanine from L-aspartate: step 1/1. Its function is as follows. Catalyzes the pyruvoyl-dependent decarboxylation of aspartate to produce beta-alanine. In Ralstonia nicotianae (strain ATCC BAA-1114 / GMI1000) (Ralstonia solanacearum), this protein is Aspartate 1-decarboxylase.